The following is a 459-amino-acid chain: MNVRDEGKTTAEKHGGGEENKSPENKWRFNSPLAQVSLMGFVCFCCPGMFNALSGMGGGGQVDPTAANNANTAVYTAFTVFGLLGGGFYNVLGPRLTLAAGCSTYVLYAGSFLYYNHHHHQAFAIVAGALLGCGAGLLWAGEGAVMTSYPPPHRKGTYIALFWSIFNLGGVIGGLIPFILNYQRSSAASVNDSTYIAFMCFMFAGVLLSFGILPATSVIRNDGSRCSAVKYSRPSTEAAAVLRLFLDRKMLLIVPAAWASNFFYSYQFNNVNGLLFNLRTRGFNNVFYWGAQMAGSIAIGYVMDFSFKSRRARGFTGISLVAVIGTIIWAGGLANQHGYSLDKLPEKKLDFKDSGIEFAGPFVLYMSYGLLDAMYQSMVYWLIGALADDSQTLSRYSGFYKGVQSAGAAVAWQVDTRKVPLMSQLIVNWSLTTVSYPLLVLLVYFYVKNDNDDDSNDKV.

The interval 1–26 (MNVRDEGKTTAEKHGGGEENKSPENK) is disordered. 11 helical membrane-spanning segments follow: residues 38–58 (LMGF…GMGG), 73–93 (AVYT…NVLG), 96–116 (LTLA…LYYN), 122–142 (AFAI…WAGE), 159–179 (IALF…IPFI), 195–215 (YIAF…ILPA), 251–271 (LLIV…FNNV), 287–307 (FYWG…DFSF), 314–334 (GFTG…GGLA), 355–375 (GIEF…DAMY), and 425–445 (LIVN…LVYF).

This sequence belongs to the unc-93 family.

Its subcellular location is the membrane. This is UNC93-like protein 1 from Arabidopsis thaliana (Mouse-ear cress).